Consider the following 261-residue polypeptide: Ethanolamine ammonia-lyase small subunit (261 aa).

Positions 157, 178, and 207 each coordinate adenosylcob(III)alamin.

The protein belongs to the EutC family. In terms of assembly, the basic unit is a heterodimer which dimerizes to form tetramers. The heterotetramers trimerize; 6 large subunits form a core ring with 6 small subunits projecting outwards. It depends on adenosylcob(III)alamin as a cofactor.

The protein resides in the bacterial microcompartment. The catalysed reaction is ethanolamine = acetaldehyde + NH4(+). Its pathway is amine and polyamine degradation; ethanolamine degradation. Its function is as follows. Catalyzes the deamination of various vicinal amino-alcohols to oxo compounds. Allows this organism to utilize ethanolamine as the sole source of nitrogen and carbon in the presence of external vitamin B12. This chain is Ethanolamine ammonia-lyase small subunit, found in Rhodopseudomonas palustris (strain BisA53).